The sequence spans 105 residues: Immunoglobulin lambda-like polypeptide 1 (105 aa).

The segment at 1 to 105 (QPKSDPLVTL…EKSVSPAECS (105 aa)) is c region. One can recognise an Ig-like C1-type domain in the interval 6 to 100 (PLVTLFLPSL…EGNTVEKSVS (95 aa)). An intrachain disulfide couples Cys-27 to Cys-86.

Associates non-covalently with VPREB1A. Interacts with SYNV1/HRD1 (via N-terminus); this interaction leads to increased IGLL1 ubiquitination and degradation in pre-B cells, possibly through a lysosomal, not proteasomal, pathway.

It localises to the endoplasmic reticulum. It is found in the secreted. Functionally, critical for B-cell development. This is Immunoglobulin lambda-like polypeptide 1 (Igll1) from Mus spretus (Western Mediterranean mouse).